The following is a 447-amino-acid chain: Chitobiosyldiphosphodolichol beta-mannosyltransferase (447 aa).

Topologically, residues 1–8 (MSVFGFDN) are lumenal. The chain crosses the membrane as a helical span at residues 9-29 (IPTWLWWLLAIYLATPFVLYV). Topologically, residues 30 to 127 (VQPYLFYEGK…LCSMFWKLRA (98 aa)) are cytoplasmic. Residues 128 to 148 (VDYILLQNPPTIPILPIAVVV) constitute an intramembrane region (helical). Over 149 to 447 (KTFSRAKLII…ALSELKIIHK (299 aa)) the chain is Lumenal.

The protein belongs to the glycosyltransferase group 1 family.

The protein localises to the endoplasmic reticulum membrane. The enzyme catalyses an N,N'-diacetylchitobiosyl-diphospho-di-trans,poly-cis-dolichol + GDP-alpha-D-mannose = a beta-D-Man-(1-&gt;4)-beta-D-GlcNAc-(1-&gt;4)-alpha-D-GlcNAc-diphospho-di-trans,poly-cis-dolichol + GDP + H(+). The protein operates within protein modification; protein glycosylation. Participates in the formation of the lipid-linked precursor oligosaccharide for N-glycosylation. Involved in assembling the dolichol-pyrophosphate-GlcNAc(2)-Man(5) intermediate on the cytoplasmic surface of the ER. The polypeptide is Chitobiosyldiphosphodolichol beta-mannosyltransferase (ALG1) (Kluyveromyces lactis (strain ATCC 8585 / CBS 2359 / DSM 70799 / NBRC 1267 / NRRL Y-1140 / WM37) (Yeast)).